The sequence spans 326 residues: Serine hydrolase-like protein (326 aa).

An AB hydrolase-1 domain is found at 44–155 (PVLCLHGWAD…FLPTEVTDMF (112 aa)). Ser-118 is a catalytic residue.

Belongs to the AB hydrolase superfamily.

Its function is as follows. Probable serine hydrolase. The chain is Serine hydrolase-like protein (serhl) from Danio rerio (Zebrafish).